We begin with the raw amino-acid sequence, 220 residues long: Adenylate kinase (220 aa).

An ATP-binding site is contributed by 10–15 (GAGKGT). Residues 30-59 (STGDMLRAAVKAGSPLGVEAKGYMDAGKLV) form an NMP region. Residues Thr31, Arg36, 57 to 59 (KLV), 85 to 88 (GFPR), and Gln92 contribute to the AMP site. Residues 122–159 (GRRTHPASGRTYHVKFNPPKVEGKDDVTGEPLIQRDDD) are LID. ATP-binding positions include Arg123 and 132–133 (TY). AMP-binding residues include Arg156 and Arg167. ATP is bound at residue Gly206.

The protein belongs to the adenylate kinase family. As to quaternary structure, monomer.

It is found in the cytoplasm. The catalysed reaction is AMP + ATP = 2 ADP. Its pathway is purine metabolism; AMP biosynthesis via salvage pathway; AMP from ADP: step 1/1. In terms of biological role, catalyzes the reversible transfer of the terminal phosphate group between ATP and AMP. Plays an important role in cellular energy homeostasis and in adenine nucleotide metabolism. The protein is Adenylate kinase of Burkholderia ambifaria (strain ATCC BAA-244 / DSM 16087 / CCUG 44356 / LMG 19182 / AMMD) (Burkholderia cepacia (strain AMMD)).